Reading from the N-terminus, the 1074-residue chain is Probable arabinosyltransferase C (1074 aa).

10 consecutive transmembrane segments (helical) span residues 15–37, 214–236, 251–273, 415–437, 452–474, 516–538, 573–595, 608–630, 645–667, and 684–706; these read ARLV…PLLP, LLKL…ALHV, SRWW…WHFV, IIIG…ALLV, RFGY…FLIF, SVAR…AMTL, THQF…VAVT, FGAA…WYVS, FGFT…WFHF, and LLVA…SLTL.

Belongs to the emb family.

It is found in the cell membrane. Its function is as follows. Arabinosyl transferase responsible for the polymerization of arabinose into the arabinan of arabinogalactan. This is Probable arabinosyltransferase C (embC) from Mycolicibacterium smegmatis (Mycobacterium smegmatis).